The following is an 829-amino-acid chain: Periplasmic nitrate reductase (829 aa).

The tat-type signal signal peptide spans 1 to 29 (MKMTRRAFVKANAAASAAAVAGVTLPASA). A 4Fe-4S Mo/W bis-MGD-type domain is found at 41 to 97 (IKWDKAPCRFCGTGCSVLVGTQNGRVVATQGDPEAPVNKGLNCIKGYFLSKIMYGKD). [4Fe-4S] cluster is bound by residues cysteine 48, cysteine 51, cysteine 55, and cysteine 83. Mo-bis(molybdopterin guanine dinucleotide) is bound by residues lysine 85, glutamine 152, asparagine 177, cysteine 181, 214 to 221 (WGSNMAEM), 245 to 249 (STYYH), 264 to 266 (QSD), methionine 374, glutamine 378, asparagine 484, 510 to 511 (SD), lysine 533, aspartate 560, and 718 to 727 (TGRVLEHWHT). Residue phenylalanine 794 participates in substrate binding. Mo-bis(molybdopterin guanine dinucleotide)-binding residues include asparagine 802 and lysine 819.

This sequence belongs to the prokaryotic molybdopterin-containing oxidoreductase family. NasA/NapA/NarB subfamily. Component of the periplasmic nitrate reductase NapAB complex composed of NapA and NapB. [4Fe-4S] cluster serves as cofactor. Mo-bis(molybdopterin guanine dinucleotide) is required as a cofactor. Predicted to be exported by the Tat system. The position of the signal peptide cleavage has not been experimentally proven.

The protein resides in the periplasm. The enzyme catalyses 2 Fe(II)-[cytochrome] + nitrate + 2 H(+) = 2 Fe(III)-[cytochrome] + nitrite + H2O. In terms of biological role, catalytic subunit of the periplasmic nitrate reductase complex NapAB. Receives electrons from NapB and catalyzes the reduction of nitrate to nitrite. The sequence is that of Periplasmic nitrate reductase from Aliivibrio fischeri (strain ATCC 700601 / ES114) (Vibrio fischeri).